Consider the following 302-residue polypeptide: Ribosomal RNA small subunit methyltransferase H (302 aa).

S-adenosyl-L-methionine contacts are provided by residues 32-34, Asp-51, Phe-78, Asp-97, and Gln-104; that span reads GGH.

The protein belongs to the methyltransferase superfamily. RsmH family.

The protein resides in the cytoplasm. It catalyses the reaction cytidine(1402) in 16S rRNA + S-adenosyl-L-methionine = N(4)-methylcytidine(1402) in 16S rRNA + S-adenosyl-L-homocysteine + H(+). Its function is as follows. Specifically methylates the N4 position of cytidine in position 1402 (C1402) of 16S rRNA. This Nitratiruptor sp. (strain SB155-2) protein is Ribosomal RNA small subunit methyltransferase H.